A 313-amino-acid chain; its full sequence is Porphobilinogen deaminase (313 aa).

S-(dipyrrolylmethanemethyl)cysteine is present on cysteine 241.

It belongs to the HMBS family. Monomer. Requires dipyrromethane as cofactor.

The enzyme catalyses 4 porphobilinogen + H2O = hydroxymethylbilane + 4 NH4(+). Its pathway is porphyrin-containing compound metabolism; protoporphyrin-IX biosynthesis; coproporphyrinogen-III from 5-aminolevulinate: step 2/4. It functions in the pathway porphyrin-containing compound metabolism; chlorophyll biosynthesis. In terms of biological role, tetrapolymerization of the monopyrrole PBG into the hydroxymethylbilane pre-uroporphyrinogen in several discrete steps. The chain is Porphobilinogen deaminase from Chlorobium phaeobacteroides (strain BS1).